The chain runs to 175 residues: uncharacterized protein (175 aa).

This sequence to yeast YER187w.

This is an uncharacterized protein from Saccharomyces cerevisiae (strain ATCC 204508 / S288c) (Baker's yeast).